We begin with the raw amino-acid sequence, 274 residues long: Tryptase beta-2 (274 aa).

The N-terminal stretch at 1–19 (MLKLLLLLALSPLASLVHA) is a signal peptide. The propeptide at 20-29 (APCPVKQRVG) is activation peptide. A Peptidase S1 domain is found at 30-271 (IVGGREASES…YLDWIHRYVP (242 aa)). Cysteine 58 and cysteine 74 are joined by a disulfide. Catalysis depends on histidine 73, which acts as the Charge relay system. Phosphotyrosine is present on tyrosine 96. Asparagine 104 carries N-linked (GlcNAc...) asparagine glycosylation. Residue aspartate 120 is the Charge relay system of the active site. N-linked (GlcNAc...) asparagine glycosylation occurs at asparagine 131. Intrachain disulfides connect cysteine 154–cysteine 229, cysteine 187–cysteine 210, and cysteine 219–cysteine 247. Serine 223 serves as the catalytic Charge relay system.

It belongs to the peptidase S1 family. Tryptase subfamily. As to quaternary structure, homotetramer. The active tetramer is converted to inactive monomers at neutral and acidic pH in the absence of heparin. Low concentrations of inactive monomers become active monomers at pH 6.0 in the presence of heparin. When the concentration of active monomers is higher, they convert to active monomers and then to active tetramers. These monomers are active and functionally distinct from the tetrameric enzyme. In contrast to the hidden active sites in the tetrameric form, the active site of the monomeric form is accessible for macromolecular proteins and inhibitors, e.g. fibrinogen which is a substrate for the monomeric but not for the tetrameric form. The monomeric form forms a complex with SERPINB6.

Its subcellular location is the secreted. It catalyses the reaction Preferential cleavage: Arg-|-Xaa, Lys-|-Xaa, but with more restricted specificity than trypsin.. Functionally, tryptase is the major neutral protease present in mast cells and is secreted upon the coupled activation-degranulation response of this cell type. Plays a role in innate immunity. This is Tryptase beta-2 (Tpsb2) from Rattus norvegicus (Rat).